A 192-amino-acid polypeptide reads, in one-letter code: uncharacterized protein (192 aa).

Residues 29–160 form the Nudix hydrolase domain; sequence QRQAAVLVPV…PLDIHRRGNH (132 aa). The short motif at 67–89 is the Nudix box element; that stretch reads GAVDDTDASLIAAALREAQEEVA. Mg(2+)-binding residues include glutamate 83 and glutamate 87.

This sequence belongs to the Nudix hydrolase family. PCD1 subfamily. It depends on Mn(2+) as a cofactor. Mg(2+) is required as a cofactor.

Probably mediates the hydrolysis of some nucleoside diphosphate derivatives. This is an uncharacterized protein from Cronobacter sakazakii (strain ATCC BAA-894) (Enterobacter sakazakii).